We begin with the raw amino-acid sequence, 461 residues long: Fumarate hydratase class II (461 aa).

Residues 97 to 99 (SGT), 127 to 130 (HPND), 137 to 139 (SSN), and Thr185 each bind substrate. Catalysis depends on His186, which acts as the Proton donor/acceptor. Residue Ser316 is part of the active site. Residues Ser317 and 322–324 (KVN) contribute to the substrate site.

It belongs to the class-II fumarase/aspartase family. Fumarase subfamily. As to quaternary structure, homotetramer.

It is found in the cytoplasm. The enzyme catalyses (S)-malate = fumarate + H2O. It functions in the pathway carbohydrate metabolism; tricarboxylic acid cycle; (S)-malate from fumarate: step 1/1. Its function is as follows. Involved in the TCA cycle. Catalyzes the stereospecific interconversion of fumarate to L-malate. The polypeptide is Fumarate hydratase class II (Staphylococcus aureus (strain Mu50 / ATCC 700699)).